The chain runs to 690 residues: Eukaryotic translation initiation factor 3 subunit B (690 aa).

The interval 1-37 (MAKKKSEEQSSADANDSDYQEEPNFEDPPGFVDNISD) is disordered. Over residues 15–25 (NDSDYQEEPNF) the composition is skewed to acidic residues. Residues 57 to 141 (SVVVVDNIPK…HTFAVNLFTD (85 aa)) form the RRM domain. WD repeat units lie at residues 207 to 246 (TRER…KIQK), 293 to 331 (DGMS…LLDL), 334 to 369 (IKIP…TLME), 442 to 484 (EIRE…KPSL), and 530 to 575 (PDHF…IKRT). Positions 595–645 (EEKQKEIKKNLKKYYAAFEQKDRLRLTRASKELLEKRSQLRETFMEYRNKR) form a coiled coil.

Belongs to the eIF-3 subunit B family. In terms of assembly, component of the eukaryotic translation initiation factor 3 (eIF-3) complex. The eIF-3 complex interacts with pix. Interacts with mxt.

It localises to the cytoplasm. Its function is as follows. RNA-binding component of the eukaryotic translation initiation factor 3 (eIF-3) complex, which is involved in protein synthesis of a specialized repertoire of mRNAs and, together with other initiation factors, stimulates binding of mRNA and methionyl-tRNAi to the 40S ribosome. The eIF-3 complex specifically targets and initiates translation of a subset of mRNAs involved in cell proliferation. The polypeptide is Eukaryotic translation initiation factor 3 subunit B (Drosophila sechellia (Fruit fly)).